A 324-amino-acid polypeptide reads, in one-letter code: Fibronectin type III domain-containing protein 8 (324 aa).

Positions 179–280 (PDTPFIFEHT…KPYKFATLAT (102 aa)) constitute a Fibronectin type-III domain.

This Homo sapiens (Human) protein is Fibronectin type III domain-containing protein 8 (FNDC8).